A 154-amino-acid chain; its full sequence is Large ribosomal subunit protein uL15 (154 aa).

Residues 1–57 form a disordered region; that stretch reads MRFQDLHPQAGSRRRKRRIGRGIAAGQGASGGFGMRGQKSRSGRPTRPGFEGGQNPL. The segment covering 23 to 35 has biased composition (gly residues); that stretch reads IAAGQGASGGFGM.

This sequence belongs to the universal ribosomal protein uL15 family. Part of the 50S ribosomal subunit.

Binds to the 23S rRNA. The protein is Large ribosomal subunit protein uL15 of Thermosynechococcus vestitus (strain NIES-2133 / IAM M-273 / BP-1).